The primary structure comprises 49 residues: Large ribosomal subunit protein bL33 (49 aa).

It belongs to the bacterial ribosomal protein bL33 family.

The chain is Large ribosomal subunit protein bL33 from Pseudothermotoga lettingae (strain ATCC BAA-301 / DSM 14385 / NBRC 107922 / TMO) (Thermotoga lettingae).